A 688-amino-acid polypeptide reads, in one-letter code: DNA topoisomerase 1 (688 aa).

Residues 3-113 enclose the Toprim domain; the sequence is ENLVIVESPA…TENRVVFNEI (111 aa). Mg(2+) contacts are provided by glutamate 9 and aspartate 82. Residues 129–556 form the Topo IA-type catalytic domain; it reads EMELVDAQQA…FYSSFKQDVE (428 aa). The segment at 163 to 168 is interaction with DNA; that stretch reads SAGRVQ. The active-site O-(5'-phospho-DNA)-tyrosine intermediate is tyrosine 298. The tract at residues 322 to 349 is disordered; it reads YGNDYTSNRKSKGQGDQDAHEAIRPSST. Over residues 334–344 the composition is skewed to basic and acidic residues; sequence GQGDQDAHEAI. 3 C4-type zinc fingers span residues 576 to 602, 616 to 644, and 657 to 680; these read CEVC…FPDC, CPKC…YPEC, and CPKC…CSNC.

Belongs to the type IA topoisomerase family. As to quaternary structure, monomer. Requires Mg(2+) as cofactor.

The catalysed reaction is ATP-independent breakage of single-stranded DNA, followed by passage and rejoining.. Releases the supercoiling and torsional tension of DNA, which is introduced during the DNA replication and transcription, by transiently cleaving and rejoining one strand of the DNA duplex. Introduces a single-strand break via transesterification at a target site in duplex DNA. The scissile phosphodiester is attacked by the catalytic tyrosine of the enzyme, resulting in the formation of a DNA-(5'-phosphotyrosyl)-enzyme intermediate and the expulsion of a 3'-OH DNA strand. The free DNA strand then undergoes passage around the unbroken strand, thus removing DNA supercoils. Finally, in the religation step, the DNA 3'-OH attacks the covalent intermediate to expel the active-site tyrosine and restore the DNA phosphodiester backbone. This Staphylococcus saprophyticus subsp. saprophyticus (strain ATCC 15305 / DSM 20229 / NCIMB 8711 / NCTC 7292 / S-41) protein is DNA topoisomerase 1.